Reading from the N-terminus, the 295-residue chain is MAETKVAPNLTGIEQTKAGQSFTEKLSAEAMEFFCNVAKLPFSQQAVHFLNAYWAEVSKEAEFIYSVGWETIKYADMHCKGIQLVFKYDEGNDLDFDIALYFYEQLCKFCEDPKNKNYATTYPISQPQMLTALKRKQELREKVDVNFDGRVSFLEYLLYQYKDFANPADFCTRSMNHDEHPEIKKARLALEEVNKRIRAYEEEKARLTEESKIPGVKGLGATNMLAQIDSGPLKEQLNFALISAEAAVRTASKKYGGAAYSGGAGDAGAGSSAGAIWWMNRDLEEKKKRYGPQKK.

Monomer.

Functionally, may contribute to the structure and reorganization of filopodia and pseudopodia accompanying cell movements. This is Calcium-regulated actin-bundling protein (abpB) from Dictyostelium discoideum (Social amoeba).